The primary structure comprises 72 residues: Translation initiation factor IF-1 (72 aa).

The region spanning 1–72 is the S1-like domain; sequence MARDDVIEVD…DKGRITFRYK (72 aa).

The protein belongs to the IF-1 family. As to quaternary structure, component of the 30S ribosomal translation pre-initiation complex which assembles on the 30S ribosome in the order IF-2 and IF-3, IF-1 and N-formylmethionyl-tRNA(fMet); mRNA recruitment can occur at any time during PIC assembly.

The protein localises to the cytoplasm. In terms of biological role, one of the essential components for the initiation of protein synthesis. Stabilizes the binding of IF-2 and IF-3 on the 30S subunit to which N-formylmethionyl-tRNA(fMet) subsequently binds. Helps modulate mRNA selection, yielding the 30S pre-initiation complex (PIC). Upon addition of the 50S ribosomal subunit IF-1, IF-2 and IF-3 are released leaving the mature 70S translation initiation complex. This chain is Translation initiation factor IF-1, found in Helicobacter pylori (strain HPAG1).